Here is a 205-residue protein sequence, read N- to C-terminus: Holliday junction branch migration complex subunit RuvA (205 aa).

Residues 1 to 64 (MIGRLRGVLV…EDAQLLYGFI (64 aa)) form a domain I region. The domain II stretch occupies residues 65 to 143 (TKQERALFRL…SLMEASAGSE (79 aa)). The flexible linker stretch occupies residues 144 to 156 (REFVLQSNYSPTP). Residues 157–205 (TVNSAEEDAISALISLGYKPPQASKSVSAAYKEGMDSETLIKAALKSML) form a domain III region.

The protein belongs to the RuvA family. Homotetramer. Forms an RuvA(8)-RuvB(12)-Holliday junction (HJ) complex. HJ DNA is sandwiched between 2 RuvA tetramers; dsDNA enters through RuvA and exits via RuvB. An RuvB hexamer assembles on each DNA strand where it exits the tetramer. Each RuvB hexamer is contacted by two RuvA subunits (via domain III) on 2 adjacent RuvB subunits; this complex drives branch migration. In the full resolvosome a probable DNA-RuvA(4)-RuvB(12)-RuvC(2) complex forms which resolves the HJ.

The protein localises to the cytoplasm. The RuvA-RuvB-RuvC complex processes Holliday junction (HJ) DNA during genetic recombination and DNA repair, while the RuvA-RuvB complex plays an important role in the rescue of blocked DNA replication forks via replication fork reversal (RFR). RuvA specifically binds to HJ cruciform DNA, conferring on it an open structure. The RuvB hexamer acts as an ATP-dependent pump, pulling dsDNA into and through the RuvAB complex. HJ branch migration allows RuvC to scan DNA until it finds its consensus sequence, where it cleaves and resolves the cruciform DNA. This chain is Holliday junction branch migration complex subunit RuvA, found in Shewanella sp. (strain W3-18-1).